Consider the following 432-residue polypeptide: Anaerobic glycerol-3-phosphate dehydrogenase subunit B (432 aa).

This sequence belongs to the anaerobic G-3-P dehydrogenase subunit B family. In terms of assembly, composed of a catalytic GlpA/B dimer and of membrane bound GlpC. Requires FMN as cofactor.

It carries out the reaction a quinone + sn-glycerol 3-phosphate = dihydroxyacetone phosphate + a quinol. Its pathway is polyol metabolism; glycerol degradation via glycerol kinase pathway; glycerone phosphate from sn-glycerol 3-phosphate (anaerobic route): step 1/1. Conversion of glycerol 3-phosphate to dihydroxyacetone. Uses fumarate or nitrate as electron acceptor. The chain is Anaerobic glycerol-3-phosphate dehydrogenase subunit B from Haemophilus influenzae (strain PittEE).